The sequence spans 374 residues: U-box domain-containing protein 8 (374 aa).

The U-box domain maps to 4–79 (DLPNDFRCPI…LNFAHVSLKE (76 aa)). 5 ARM repeats span residues 126-165 (SSIRRKVTESGAVRAALDCVDSCNQVLQEKSLSLLLNLSL), 167-206 (DDNKVGLVADGVIRRIVTVLRVGSPDCKAIAATLLTSLAV), 208-248 (EVNK…ALCS), 250-288 (PDNRKRVVDCGSVPILVEAADSGLERAVEVLGLLVKCRG), and 289-327 (GREEMSKVSGFVEVLVNVLRNGNLKGIQYSLFILNCLCC).

As to expression, expressed in the whole plant.

It carries out the reaction S-ubiquitinyl-[E2 ubiquitin-conjugating enzyme]-L-cysteine + [acceptor protein]-L-lysine = [E2 ubiquitin-conjugating enzyme]-L-cysteine + N(6)-ubiquitinyl-[acceptor protein]-L-lysine.. It functions in the pathway protein modification; protein ubiquitination. Functionally, functions as an E3 ubiquitin ligase. Involved in the age-dependent pseudo-self-compatibility process. In Arabidopsis thaliana (Mouse-ear cress), this protein is U-box domain-containing protein 8 (PUB8).